The sequence spans 349 residues: tRNA pseudouridine synthase D (349 aa).

Phe-27 contacts substrate. Residue Asp-80 is the Nucleophile of the active site. A substrate-binding site is contributed by Asn-129. The TRUD domain maps to 155 to 303; that stretch reads GVPNYFGAQR…VEAARRAMLL (149 aa). Phe-329 is a substrate binding site.

This sequence belongs to the pseudouridine synthase TruD family.

It catalyses the reaction uridine(13) in tRNA = pseudouridine(13) in tRNA. Responsible for synthesis of pseudouridine from uracil-13 in transfer RNAs. In Escherichia coli O81 (strain ED1a), this protein is tRNA pseudouridine synthase D.